The sequence spans 195 residues: Phosphoheptose isomerase (195 aa).

In terms of domain architecture, SIS spans 36–195 (LAHCLLSDGK…DLVDHQLFGE (160 aa)). A substrate-binding site is contributed by 51-53 (NGG). 2 residues coordinate Zn(2+): His-60 and Glu-64. Substrate contacts are provided by residues Glu-64, 93–94 (ND), 119–121 (STS), Ser-124, and Gln-174. Zn(2+) is bound by residues Gln-174 and His-182.

It belongs to the SIS family. GmhA subfamily. As to quaternary structure, homotetramer. It depends on Zn(2+) as a cofactor.

The protein resides in the cytoplasm. The enzyme catalyses 2 D-sedoheptulose 7-phosphate = D-glycero-alpha-D-manno-heptose 7-phosphate + D-glycero-beta-D-manno-heptose 7-phosphate. Its pathway is carbohydrate biosynthesis; D-glycero-D-manno-heptose 7-phosphate biosynthesis; D-glycero-alpha-D-manno-heptose 7-phosphate and D-glycero-beta-D-manno-heptose 7-phosphate from sedoheptulose 7-phosphate: step 1/1. Functionally, catalyzes the isomerization of sedoheptulose 7-phosphate in D-glycero-D-manno-heptose 7-phosphate. In Methylococcus capsulatus (strain ATCC 33009 / NCIMB 11132 / Bath), this protein is Phosphoheptose isomerase.